The chain runs to 92 residues: Small ribosomal subunit protein uS19 (92 aa).

This sequence belongs to the universal ribosomal protein uS19 family.

Its function is as follows. Protein S19 forms a complex with S13 that binds strongly to the 16S ribosomal RNA. This Nostoc punctiforme (strain ATCC 29133 / PCC 73102) protein is Small ribosomal subunit protein uS19.